A 532-amino-acid polypeptide reads, in one-letter code: Chondroitin sulfate N-acetylgalactosaminyltransferase 1 (532 aa).

The Cytoplasmic segment spans residues 1–14; that stretch reads MMMVRRGLLAWISR. A helical; Signal-anchor for type II membrane protein transmembrane segment spans residues 15–35; the sequence is VVVLLVLLCCAISVLYMLACT. Residues 36-532 are Lumenal-facing; sequence PKGDEEQLAL…QKQKTSSKKT (497 aa). The stretch at 57–100 forms a coiled coil; it reads YQAVLQEWEEQHRNYVSSLKRQIAQLKEELQERSEQLRNGQYQA. N-linked (GlcNAc...) asparagine glycosylation is found at Asn315 and Asn324. A divalent metal cation-binding residues include Asp360 and His477.

This sequence belongs to the chondroitin N-acetylgalactosaminyltransferase family. Post-translationally, N-glycosylated. Ubiquitous, with the highest levels in placenta, thyroid, bladder, prostate and adrenal gland. Detected at low levels in the other tissues examined.

It is found in the golgi apparatus. Its subcellular location is the golgi stack membrane. The catalysed reaction is 3-O-(beta-D-GlcA-(1-&gt;3)-beta-D-Gal-(1-&gt;3)-beta-D-Gal-(1-&gt;4)-beta-D-Xyl)-L-seryl-[protein] + UDP-N-acetyl-alpha-D-galactosamine = 3-O-(beta-D-GalNAc-(1-&gt;4)-beta-D-GlcA-(1-&gt;3)-beta-D-Gal-(1-&gt;3)-beta-D-Gal-(1-&gt;4)-beta-D-Xyl)-L-seryl-[protein] + UDP + H(+). Transfers 1,4-N-acetylgalactosamine (GalNAc) from UDP-GalNAc to the non-reducing end of glucuronic acid (GlcUA). Required for addition of the first GalNAc to the core tetrasaccharide linker and for elongation of chondroitin chains. Important role in chondroitin chain biosynthesis in cartilage formation and subsequent endochondral ossification. Moreover, is involved in the metabolism of aggrecan. This Homo sapiens (Human) protein is Chondroitin sulfate N-acetylgalactosaminyltransferase 1.